We begin with the raw amino-acid sequence, 245 residues long: tRNA pseudouridine synthase A (245 aa).

The Nucleophile role is filled by Asp-52. Tyr-111 is a binding site for substrate.

Belongs to the tRNA pseudouridine synthase TruA family. As to quaternary structure, homodimer.

The enzyme catalyses uridine(38/39/40) in tRNA = pseudouridine(38/39/40) in tRNA. Its function is as follows. Formation of pseudouridine at positions 38, 39 and 40 in the anticodon stem and loop of transfer RNAs. This is tRNA pseudouridine synthase A from Thermotoga maritima (strain ATCC 43589 / DSM 3109 / JCM 10099 / NBRC 100826 / MSB8).